The sequence spans 521 residues: 2,3-bisphosphoglycerate-independent phosphoglycerate mutase 2 (521 aa).

Mn(2+) is bound by residues Asp20 and Ser70. Ser70 acts as the Phosphoserine intermediate in catalysis. Residues His131, Arg161–Asp162, Arg193, Arg199, Arg270–Arg273, and Lys343 contribute to the substrate site. Asp410, His414, Asp451, His452, and His470 together coordinate Mn(2+).

It belongs to the BPG-independent phosphoglycerate mutase family. Mn(2+) serves as cofactor.

It catalyses the reaction (2R)-2-phosphoglycerate = (2R)-3-phosphoglycerate. It participates in carbohydrate degradation; glycolysis; pyruvate from D-glyceraldehyde 3-phosphate: step 3/5. In terms of biological role, catalyzes the interconversion of 2-phosphoglycerate and 3-phosphoglycerate. The protein is 2,3-bisphosphoglycerate-independent phosphoglycerate mutase 2 of Methanosarcina acetivorans (strain ATCC 35395 / DSM 2834 / JCM 12185 / C2A).